The following is a 283-amino-acid chain: CDP-abequose synthase (283 aa).

NAD(+)-binding positions include 7–13 (GGSGYIG), 48–49 (EF), Tyr129, and Lys133. The active-site Proton acceptor is the Tyr129.

It belongs to the NAD(P)-dependent epimerase/dehydratase family.

The enzyme catalyses CDP-alpha-D-abequose + NADP(+) = CDP-4-dehydro-3,6-dideoxy-alpha-D-glucose + NADPH + H(+). The protein operates within bacterial outer membrane biogenesis; LPS O-antigen biosynthesis. Functionally, the CDP-abequose synthase is involved in lipopolysaccharides (LPS) synthesis containing abequose which are important antigens of the cell surface responsible for the serological O specificity. Derivatives of the 3,6-dideoxyhexose group have a particular highly immunogenic character. The chain is CDP-abequose synthase (rfbJ) from Yersinia pseudotuberculosis.